The primary structure comprises 557 residues: MSTEKQYQPQQPPPAYTGQGPDNGNAYGYPESYGKTETHSGDSCSGDTSMNPQQQGQQYQFRKDDEFYNLNHEGAGAPIGSYAEVFPTEDNNKPKFNDWPFIIVFLLTLCGFIVVASLTLRAWSQTYSSTGSGIYHDFDTGTLNTNSVILLVFSVVIAIFFAFIGIVLCRAYPKFFIYAGMIVNILAALGTAIMYMSLKYWSAGIVFLIFTFMTAWCYWGMRSRIPLTVAILRVIVLAMKNCPQSLFVSFFGTIVASAFAMLFSTVVVATYMKYDPSNTNSGCNVSGGDCSHAKLIGVLVVVFFCGYYISEVIRNVMHCTVSGVFGSWYYRYKSDQGMPKWPAMGAFKRAMTYSFGSICFGSLIVSIIETFRQLLQLGKQAAIASTDNANWIRIIFWLIDMLVGFIQWIAQYFNHYAYCIIALYGKPYLKAAKQTWYMFREKGIDALINDNLVNVALGFYSLFASYMSCLFAFLYLRFTKPGYNSDGDFNAPLMAFAFVIALQLTNIANETIRSGCATFFTALGHDPEVFQAQYPDRFDEIFRSYPQVLNKLTHQDV.

The disordered stretch occupies residues 1 to 58 (MSTEKQYQPQQPPPAYTGQGPDNGNAYGYPESYGKTETHSGDSCSGDTSMNPQQQGQQ). The Cytoplasmic portion of the chain corresponds to 1–99 (MSTEKQYQPQ…DNNKPKFNDW (99 aa)). Positions 41 to 58 (GDSCSGDTSMNPQQQGQQ) are enriched in polar residues. Residues 100–120 (PFIIVFLLTLCGFIVVASLTL) traverse the membrane as a helical segment. The Extracellular portion of the chain corresponds to 121-147 (RAWSQTYSSTGSGIYHDFDTGTLNTNS). Residues 148–168 (VILLVFSVVIAIFFAFIGIVL) traverse the membrane as a helical segment. The Cytoplasmic portion of the chain corresponds to 169-174 (CRAYPK). Residues 175–195 (FFIYAGMIVNILAALGTAIMY) traverse the membrane as a helical segment. The Extracellular segment spans residues 196–200 (MSLKY). Residues 201–221 (WSAGIVFLIFTFMTAWCYWGM) form a helical membrane-spanning segment. Topologically, residues 222–246 (RSRIPLTVAILRVIVLAMKNCPQSL) are cytoplasmic. The helical transmembrane segment at 247–267 (FVSFFGTIVASAFAMLFSTVV) threads the bilayer. Topologically, residues 268–292 (VATYMKYDPSNTNSGCNVSGGDCSH) are extracellular. A glycan (N-linked (GlcNAc...) asparagine) is linked at Asn284. The chain crosses the membrane as a helical span at residues 293–313 (AKLIGVLVVVFFCGYYISEVI). Residues 314 to 350 (RNVMHCTVSGVFGSWYYRYKSDQGMPKWPAMGAFKRA) are Cytoplasmic-facing. The chain crosses the membrane as a helical span at residues 351–371 (MTYSFGSICFGSLIVSIIETF). Over 372–393 (RQLLQLGKQAAIASTDNANWIR) the chain is Extracellular. Residues 394–414 (IIFWLIDMLVGFIQWIAQYFN) traverse the membrane as a helical segment. Residues 415–454 (HYAYCIIALYGKPYLKAAKQTWYMFREKGIDALINDNLVN) are Cytoplasmic-facing. A helical membrane pass occupies residues 455-475 (VALGFYSLFASYMSCLFAFLY). Residues 476-488 (LRFTKPGYNSDGD) lie on the Extracellular side of the membrane. The chain crosses the membrane as a helical span at residues 489-509 (FNAPLMAFAFVIALQLTNIAN). Topologically, residues 510–557 (ETIRSGCATFFTALGHDPEVFQAQYPDRFDEIFRSYPQVLNKLTHQDV) are cytoplasmic.

The protein belongs to the CTL (choline transporter-like) family.

The protein resides in the cell membrane. Its function is as follows. Probably involved in transport through the plasma membrane. The chain is Protein PNS1 (PNS1) from Candida glabrata (strain ATCC 2001 / BCRC 20586 / JCM 3761 / NBRC 0622 / NRRL Y-65 / CBS 138) (Yeast).